Reading from the N-terminus, the 398-residue chain is Protein ELC (398 aa).

Residues 18–162 (ALSQRGPSSV…ARDPPLYSRR (145 aa)) enclose the UEV domain. Residues 157–202 (PLYSRRRPQPPPPSPPTVYDSSLSRPPSADQSLPRPFPPSPYGGGV) are disordered. The span at 175–187 (YDSSLSRPPSADQ) shows a compositional bias: polar residues. Positions 247-291 (EAEAEELLSLQAGLKRREDELNIGLKEMVEEKETLEQQLQIISMN) form a coiled coil. Positions 322–390 (DTLSKQMLEC…RAAQMEVQVA (69 aa)) constitute an SB domain.

This sequence belongs to the ubiquitin-conjugating enzyme family. UEV subfamily. Component of the endosomal sorting required for transport complex I (ESCRT-I), composed of ELC, VPS28 and VPS37. Interacts with VPS28 and VPS37. Binds ubiquitin in vitro. Interacts with FREE1. Interacts with TOL9/TOM1D. Interacts with BRO1/ALIX. Interacts with SINAT1, SINAT2, SINAT3 and SINAT4. Ubiquitinated by SINAT1, SINAT2, SINAT3 and SINAT4 for subsequent proteasomal degradation. As to expression, expressed in roots, stems, leaves and flowers.

Its subcellular location is the early endosome. The protein localises to the late endosome. It localises to the prevacuolar compartment. In terms of biological role, component of the ESCRT-I complex (endosomal sorting complex required for transport I), a regulator of vesicular trafficking process. Required for the sorting of endocytic ubiquitinated cargos into multivesicular bodies (MVBs). May control nuclear division through the microtubule cytoskeleton. This is Protein ELC from Arabidopsis thaliana (Mouse-ear cress).